We begin with the raw amino-acid sequence, 144 residues long: Phosphomevalonate dehydratase small subunit (144 aa).

The active-site Proton acceptor is Ser-65.

The protein belongs to the AcnX type II small subunit family. As to quaternary structure, heterodimer composed of a large subunit (PMDh-L) and a small subunit (PMDh-S).

It catalyses the reaction (R)-5-phosphomevalonate = (2E)-3-methyl-5-phosphooxypent-2-enoate + H2O. The protein operates within isoprenoid biosynthesis; isopentenyl diphosphate biosynthesis via mevalonate pathway. Its function is as follows. Component of a hydro-lyase that catalyzes the dehydration of mevalonate 5-phosphate (MVA5P) to form trans-anhydromevalonate 5-phosphate (tAHMP). Involved in the archaeal mevalonate (MVA) pathway, which provides fundamental precursors for isoprenoid biosynthesis, such as isopentenyl diphosphate (IPP) and dimethylallyl diphosphate (DMAPP). The chain is Phosphomevalonate dehydratase small subunit from Methanosarcina acetivorans (strain ATCC 35395 / DSM 2834 / JCM 12185 / C2A).